A 98-amino-acid chain; its full sequence is Large ribosomal subunit protein uL23 (98 aa).

It belongs to the universal ribosomal protein uL23 family. In terms of assembly, part of the 50S ribosomal subunit. Contacts protein L29, and trigger factor when it is bound to the ribosome.

Functionally, one of the early assembly proteins it binds 23S rRNA. One of the proteins that surrounds the polypeptide exit tunnel on the outside of the ribosome. Forms the main docking site for trigger factor binding to the ribosome. The polypeptide is Large ribosomal subunit protein uL23 (Alcanivorax borkumensis (strain ATCC 700651 / DSM 11573 / NCIMB 13689 / SK2)).